The following is a 447-amino-acid chain: N-succinylarginine dihydrolase (447 aa).

Substrate contacts are provided by residues 19 to 28 (AGLSFGNVAS), asparagine 110, and 137 to 138 (HR). The active site involves glutamate 174. Arginine 214 is a binding site for substrate. Histidine 250 is a catalytic residue. Substrate contacts are provided by aspartate 252 and asparagine 364. Catalysis depends on cysteine 370, which acts as the Nucleophile.

The protein belongs to the succinylarginine dihydrolase family. In terms of assembly, homodimer.

The catalysed reaction is N(2)-succinyl-L-arginine + 2 H2O + 2 H(+) = N(2)-succinyl-L-ornithine + 2 NH4(+) + CO2. It participates in amino-acid degradation; L-arginine degradation via AST pathway; L-glutamate and succinate from L-arginine: step 2/5. Catalyzes the hydrolysis of N(2)-succinylarginine into N(2)-succinylornithine, ammonia and CO(2). The polypeptide is N-succinylarginine dihydrolase (Idiomarina loihiensis (strain ATCC BAA-735 / DSM 15497 / L2-TR)).